The sequence spans 689 residues: DNA polymerase epsilon subunit B (689 aa).

The segment covering 98 to 115 has biased composition (basic and acidic residues); sequence EWSHEHPIQHEENILGRT. Residues 98 to 155 form a disordered region; sequence EWSHEHPIQHEENILGRTDDDENNSDDEMPIAADSSLQNVSLSSPMRQPTERDEYKQP. Acidic residues predominate over residues 116–126; sequence DDDENNSDDEM. Residue S122 is modified to Phosphoserine. Positions 132 to 144 are enriched in polar residues; sequence SSLQNVSLSSPMR. S141 carries the phosphoserine; by CDC28 modification. Positions 146–155 are enriched in basic and acidic residues; sequence PTERDEYKQP. S613 carries the post-translational modification Phosphoserine.

The protein belongs to the DNA polymerase epsilon subunit B family. As to quaternary structure, DNA polymerase epsilon is a heterotetramer consisting of POL2, DPB2, DPB3 and DPB4. Phosphorylated in a cell cycle dependent manner during late G1 phase. Phosphorylation may facilitate the interaction with POL2 or the activity of DNA polymerase II. Phosphorylation is independent of DNA replication but dependent upon CDC28 in vivo. Both Ser-141 and Ser-613 are phosphorylated in vivo, but in vitro only Ser-141 is phosphorylated by CDC28.

It localises to the cytoplasm. It is found in the nucleus. Functionally, as accessory component of the DNA polymerase epsilon complex participates in chromosomal DNA replication. It is required during synthesis of the leading and lagging DNA strands at the replication fork and binds at/or near replication origins and moves along DNA with the replication fork. It has 3'-5' proofreading exonuclease activity that correct errors arising during DNA replication. It is also involved in DNA synthesis during DNA repair. This Saccharomyces cerevisiae (strain ATCC 204508 / S288c) (Baker's yeast) protein is DNA polymerase epsilon subunit B (DPB2).